We begin with the raw amino-acid sequence, 80 residues long: Putative membrane protein insertion efficiency factor (80 aa).

Belongs to the UPF0161 family.

It is found in the cell membrane. Functionally, could be involved in insertion of integral membrane proteins into the membrane. In Shouchella clausii (strain KSM-K16) (Alkalihalobacillus clausii), this protein is Putative membrane protein insertion efficiency factor.